A 140-amino-acid polypeptide reads, in one-letter code: UPF0336 protein TW736 (140 aa).

The protein belongs to the UPF0336 family.

In Tropheryma whipplei (strain TW08/27) (Whipple's bacillus), this protein is UPF0336 protein TW736.